Reading from the N-terminus, the 316-residue chain is Ribosomal RNA small subunit methyltransferase H (316 aa).

S-adenosyl-L-methionine is bound by residues 35-37 (AGH), Asp55, Phe84, Asp105, and Gln112.

Belongs to the methyltransferase superfamily. RsmH family.

The protein resides in the cytoplasm. It catalyses the reaction cytidine(1402) in 16S rRNA + S-adenosyl-L-methionine = N(4)-methylcytidine(1402) in 16S rRNA + S-adenosyl-L-homocysteine + H(+). In terms of biological role, specifically methylates the N4 position of cytidine in position 1402 (C1402) of 16S rRNA. This Streptococcus uberis (strain ATCC BAA-854 / 0140J) protein is Ribosomal RNA small subunit methyltransferase H.